The chain runs to 332 residues: CXADR-like membrane protein (332 aa).

Positions 1-19 (MHTLIRSFLGLWYVLGALA) are cleaved as a signal peptide. 2 consecutive Ig-like C2-type domains span residues 20–123 (QTEI…SFIT) and 130–220 (PSEL…VDVT). The Extracellular portion of the chain corresponds to 20-231 (QTEIKLVADE…QSVSNTGILA (212 aa)). Disulfide bonds link cysteine 35-cysteine 109 and cysteine 151-cysteine 204. Asparagine 193 carries an N-linked (GlcNAc...) asparagine glycan. A helical transmembrane segment spans residues 232–252 (GVACGVVVGVFLIFFTVWLLF). At 253–332 (HKKEFKKREE…EQRHHCLEKI (80 aa)) the chain is on the cytoplasmic side. Residues 276–332 (PKARLVKPGSSSSDSRSSQSGSSSTRSTTNSASRSQRTHSTQETPHGEQRHHCLEKI) form a disordered region. Residues 285–310 (SSSSDSRSSQSGSSSTRSTTNSASRS) show a composition bias toward low complexity. The segment covering 320-332 (PHGEQRHHCLEKI) has biased composition (basic and acidic residues).

It is found in the cell junction. The protein localises to the tight junction. Its subcellular location is the cell membrane. This chain is CXADR-like membrane protein (clmp), found in Xenopus tropicalis (Western clawed frog).